We begin with the raw amino-acid sequence, 491 residues long: Glutamyl-tRNA(Gln) amidotransferase subunit A (491 aa).

Residues Lys-78 and Ser-158 each act as charge relay system in the active site. The active-site Acyl-ester intermediate is the Ser-182.

This sequence belongs to the amidase family. GatA subfamily. As to quaternary structure, heterotrimer of A, B and C subunits.

The catalysed reaction is L-glutamyl-tRNA(Gln) + L-glutamine + ATP + H2O = L-glutaminyl-tRNA(Gln) + L-glutamate + ADP + phosphate + H(+). Functionally, allows the formation of correctly charged Gln-tRNA(Gln) through the transamidation of misacylated Glu-tRNA(Gln) in organisms which lack glutaminyl-tRNA synthetase. The reaction takes place in the presence of glutamine and ATP through an activated gamma-phospho-Glu-tRNA(Gln). This chain is Glutamyl-tRNA(Gln) amidotransferase subunit A, found in Nitrobacter hamburgensis (strain DSM 10229 / NCIMB 13809 / X14).